Reading from the N-terminus, the 195-residue chain is Probable GTP-binding protein EngB (195 aa).

The 172-residue stretch at 24–195 (GLTEVALSGR…EIWNFIETYI (172 aa)) folds into the EngB-type G domain. GTP contacts are provided by residues 32 to 39 (GRSNVGKS), 59 to 63 (GKTQT), 77 to 80 (DVPG), 144 to 147 (TKED), and 176 to 178 (YSS). Positions 39 and 61 each coordinate Mg(2+).

This sequence belongs to the TRAFAC class TrmE-Era-EngA-EngB-Septin-like GTPase superfamily. EngB GTPase family. Requires Mg(2+) as cofactor.

Necessary for normal cell division and for the maintenance of normal septation. The polypeptide is Probable GTP-binding protein EngB (Staphylococcus epidermidis (strain ATCC 35984 / DSM 28319 / BCRC 17069 / CCUG 31568 / BM 3577 / RP62A)).